Here is a 351-residue protein sequence, read N- to C-terminus: Cobalt-precorrin-5B C(1)-methyltransferase (351 aa).

Belongs to the CbiD family.

It catalyses the reaction Co-precorrin-5B + S-adenosyl-L-methionine = Co-precorrin-6A + S-adenosyl-L-homocysteine. The protein operates within cofactor biosynthesis; adenosylcobalamin biosynthesis; cob(II)yrinate a,c-diamide from sirohydrochlorin (anaerobic route): step 6/10. Its function is as follows. Catalyzes the methylation of C-1 in cobalt-precorrin-5B to form cobalt-precorrin-6A. The polypeptide is Cobalt-precorrin-5B C(1)-methyltransferase (Thermosipho africanus (strain TCF52B)).